Consider the following 430-residue polypeptide: Hydrogenobyrinate a,c-diamide synthase (430 aa).

One can recognise a GATase cobBQ-type domain in the interval 239–422 (RIGVARDAAF…IHFYLPSDPL (184 aa)). Cys-321 serves as the catalytic Nucleophile.

Belongs to the CobB/CbiA family. Mg(2+) is required as a cofactor.

The enzyme catalyses hydrogenobyrinate + 2 L-glutamine + 2 ATP + 2 H2O = hydrogenobyrinate a,c-diamide + 2 L-glutamate + 2 ADP + 2 phosphate + 2 H(+). Its pathway is cofactor biosynthesis; adenosylcobalamin biosynthesis; cob(II)yrinate a,c-diamide from precorrin-2 (aerobic route): step 9/10. Its function is as follows. Catalyzes the ATP-dependent amidation of the two carboxylate groups at positions a and c of hydrogenobyrinate, using either L-glutamine or ammonia as the nitrogen source. The sequence is that of Hydrogenobyrinate a,c-diamide synthase from Stutzerimonas stutzeri (strain A1501) (Pseudomonas stutzeri).